Consider the following 183-residue polypeptide: ATP-dependent protease subunit HslV (183 aa).

The active site involves T13. 3 residues coordinate Na(+): G168, C171, and T174.

The protein belongs to the peptidase T1B family. HslV subfamily. A double ring-shaped homohexamer of HslV is capped on each side by a ring-shaped HslU homohexamer. The assembly of the HslU/HslV complex is dependent on binding of ATP.

The protein localises to the cytoplasm. The catalysed reaction is ATP-dependent cleavage of peptide bonds with broad specificity.. Its activity is regulated as follows. Allosterically activated by HslU binding. Protease subunit of a proteasome-like degradation complex believed to be a general protein degrading machinery. The protein is ATP-dependent protease subunit HslV of Xanthomonas euvesicatoria pv. vesicatoria (strain 85-10) (Xanthomonas campestris pv. vesicatoria).